Consider the following 172-residue polypeptide: Adenine phosphoribosyltransferase (172 aa).

This sequence belongs to the purine/pyrimidine phosphoribosyltransferase family. In terms of assembly, homodimer.

It localises to the cytoplasm. The enzyme catalyses AMP + diphosphate = 5-phospho-alpha-D-ribose 1-diphosphate + adenine. The protein operates within purine metabolism; AMP biosynthesis via salvage pathway; AMP from adenine: step 1/1. Catalyzes a salvage reaction resulting in the formation of AMP, that is energically less costly than de novo synthesis. This chain is Adenine phosphoribosyltransferase, found in Hydrogenovibrio crunogenus (strain DSM 25203 / XCL-2) (Thiomicrospira crunogena).